A 149-amino-acid chain; its full sequence is Antitoxin HigA1 (149 aa).

The HTH cro/C1-type domain occupies 42-96; it reads LIALRKHCQLSQVEVAKRMGVRQPTVSGFEKEPSDPKLSTLQRYARALDARLRLV. Positions 53–72 form a DNA-binding region, H-T-H motif; that stretch reads QVEVAKRMGVRQPTVSGFEK.

Interacts with SecB-like chaperone MT2006.

Functionally, antitoxin component of an atypical, type II toxin-antitoxin chaperone (TAC) system. Probably neutralizes the toxic effects of cognate toxin HigB1, which also requires SecB-like chaperone MT2006 (AC Q7D7P7). Autorepresses its operon (higB1-higA1-MT2006). The polypeptide is Antitoxin HigA1 (Mycobacterium tuberculosis (strain CDC 1551 / Oshkosh)).